A 176-amino-acid chain; its full sequence is Viral interleukin-10 homolog (176 aa).

An N-terminal signal peptide occupies residues 1–25 (MLSVMVSSSLVLIVFFLGASEEAKP). 2 disulfide bridges follow: cysteine 38/cysteine 128 and cysteine 82/cysteine 133. Asparagine 152 carries an N-linked (GlcNAc...) asparagine; by host glycan.

It belongs to the IL-10 family. Homodimer; disulfide-linked.

Its subcellular location is the secreted. In terms of biological role, functional viral IL-10 homolog. Can bind to the human IL-10 receptor and compete with human IL-10 for binding sites. Requires both subunits of the human IL-10 receptor complex to induce signal transduction events and biological activities. IL-10 signaling pathway has several immunosuppressive activities that are exploited by the virus. Inhibits TLR-induced type I interferon production in host plasmacytoid dendritic cells. The chain is Viral interleukin-10 homolog (UL111A) from Homo sapiens (Human).